The sequence spans 309 residues: Aspartate carbamoyltransferase catalytic subunit (309 aa).

Arginine 55 and threonine 56 together coordinate carbamoyl phosphate. Residue lysine 85 coordinates L-aspartate. 3 residues coordinate carbamoyl phosphate: arginine 106, histidine 135, and glutamine 138. Residues arginine 168 and arginine 230 each coordinate L-aspartate. Carbamoyl phosphate is bound by residues leucine 268 and proline 269.

It belongs to the aspartate/ornithine carbamoyltransferase superfamily. ATCase family. As to quaternary structure, heterododecamer (2C3:3R2) of six catalytic PyrB chains organized as two trimers (C3), and six regulatory PyrI chains organized as three dimers (R2).

The enzyme catalyses carbamoyl phosphate + L-aspartate = N-carbamoyl-L-aspartate + phosphate + H(+). Its pathway is pyrimidine metabolism; UMP biosynthesis via de novo pathway; (S)-dihydroorotate from bicarbonate: step 2/3. Catalyzes the condensation of carbamoyl phosphate and aspartate to form carbamoyl aspartate and inorganic phosphate, the committed step in the de novo pyrimidine nucleotide biosynthesis pathway. The chain is Aspartate carbamoyltransferase catalytic subunit from Aliivibrio fischeri (strain MJ11) (Vibrio fischeri).